The sequence spans 72 residues: Cell division protein ZapB (72 aa).

Residues 1-72 adopt a coiled-coil conformation; that stretch reads MSLEILDQLE…RSLLGKIDNV (72 aa). Residues 33-57 are disordered; it reads KNNQSQQANDALRSENEQLKSEHQN. Positions 44 to 57 are enriched in basic and acidic residues; that stretch reads LRSENEQLKSEHQN.

Belongs to the ZapB family. In terms of assembly, homodimer. The ends of the coiled-coil dimer bind to each other, forming polymers. Interacts with FtsZ.

The protein localises to the cytoplasm. In terms of biological role, non-essential, abundant cell division factor that is required for proper Z-ring formation. It is recruited early to the divisome by direct interaction with FtsZ, stimulating Z-ring assembly and thereby promoting cell division earlier in the cell cycle. Its recruitment to the Z-ring requires functional FtsA or ZipA. The polypeptide is Cell division protein ZapB (Pasteurella multocida (strain Pm70)).